The chain runs to 377 residues: MKSKVLALLIPALLAAGAAHAAEVYNKDGNKLDLYGKVDGLHYFSDNSAKDGDQSYARLGFKGETQINDQLTGYGQWEYNIQANNTESSKNQSWTRLAFAGLKFADYGSFDYGRNYGVMYDIEGWTDMLPEFGGDSYTNADNFMTGRANGVATYRNTDFFGLVNGLNFAVQYQGNNEGASNGQEGTNNGRDVRHENGDGWGLSTTYDLGMGFSAGAAYTSSDRTNDQVNHTAAGGDKADAWTAGLKYDANNIYLATMYSETRNMTPFGDSDYAVANKTQNFEVTAQYQFDFGLRPAVSFLMSKGRDLHAAGGADNPAGVDDKDLVKYADIGATYYFNKNMSTYVDYKINLLDEDDSFYAANGISTDDIVALGLVYQF.

The first 21 residues, 1–21 (MKSKVLALLIPALLAAGAAHA), serve as a signal peptide directing secretion. Residues 175-189 (NNEGASNGQEGTNNG) are compositionally biased toward polar residues. A disordered region spans residues 175-196 (NNEGASNGQEGTNNGRDVRHEN).

Belongs to the Gram-negative porin family. As to quaternary structure, homotrimer.

It is found in the cell outer membrane. Functionally, forms pores that allow passive diffusion of small molecules across the outer membrane. Non-specific porin. The sequence is that of Outer membrane porin N (ompN) from Escherichia coli (strain K12).